A 234-amino-acid polypeptide reads, in one-letter code: Ribosome maturation protein SDO1 homolog (234 aa).

The protein belongs to the SDO1/SBDS family.

This Archaeoglobus fulgidus (strain ATCC 49558 / DSM 4304 / JCM 9628 / NBRC 100126 / VC-16) protein is Ribosome maturation protein SDO1 homolog.